A 239-amino-acid polypeptide reads, in one-letter code: MNGLNNHASNIEIVLPELIEAVFVERVNRFVGMVQVAGHICPAHVPSSGRMRELLFPGNIVYISPMPKGRKTQYRIHLAKYDDIMVSVDSLLPNRLMYKVLSEGAISHFAMYEEVKKEVGYGESRFDIYLKGEAGRCFIEVKSVTLVDEGVAKFPDAPSERGSKHLSELTRAVGEGYRSAVIFIIQRDDARSFSPNSITDPVFSQTLSQAIEAGVEIYALACDVSLNTVRLKKYIPVQL.

The protein belongs to the SfsA family.

This chain is Sugar fermentation stimulation protein homolog, found in Desulforamulus reducens (strain ATCC BAA-1160 / DSM 100696 / MI-1) (Desulfotomaculum reducens).